The primary structure comprises 1266 residues: 5-oxoprolinase 1 (1266 aa).

It belongs to the oxoprolinase family. As to expression, expressed in roots, stems, leaves, flowers and siliques.

It localises to the cytoplasm. It carries out the reaction 5-oxo-L-proline + ATP + 2 H2O = L-glutamate + ADP + phosphate + H(+). Functionally, catalyzes the cleavage of 5-oxo-L-proline to form L-glutamate coupled to the hydrolysis of ATP to ADP and inorganic phosphate. Acts in the glutathione degradation pathway. In Arabidopsis thaliana (Mouse-ear cress), this protein is 5-oxoprolinase 1.